The chain runs to 325 residues: GMP reductase (325 aa).

The active-site Thioimidate intermediate is the Cys-174. 203 to 226 (IVADGGIRNNGDIAKSIRFGASMC) lines the NADP(+) pocket.

Belongs to the IMPDH/GMPR family. GuaC type 2 subfamily.

It catalyses the reaction IMP + NH4(+) + NADP(+) = GMP + NADPH + 2 H(+). Functionally, catalyzes the irreversible NADPH-dependent deamination of GMP to IMP. It functions in the conversion of nucleobase, nucleoside and nucleotide derivatives of G to A nucleotides, and in maintaining the intracellular balance of A and G nucleotides. This is GMP reductase from Ligilactobacillus salivarius (strain UCC118) (Lactobacillus salivarius).